Here is a 231-residue protein sequence, read N- to C-terminus: uncharacterized protein (231 aa).

Basic and acidic residues predominate over residues 1-10; it reads MDGKKREVEN. The disordered stretch occupies residues 1-35; it reads MDGKKREVENGKNGNNIKDGNSSNTTNYGKDTKTT. The segment covering 11-24 has biased composition (low complexity); that stretch reads GKNGNNIKDGNSSN. Over residues 25 to 35 the composition is skewed to polar residues; the sequence is TTNYGKDTKTT.

This is an uncharacterized protein from Aquifex aeolicus (strain VF5).